Here is a 183-residue protein sequence, read N- to C-terminus: Negative modulator of initiation of replication (183 aa).

The interval 90–91 is interaction with DNA; the sequence is AV.

Belongs to the SeqA family. Homodimer. Polymerizes to form helical filaments.

The protein resides in the cytoplasm. In terms of biological role, negative regulator of replication initiation, which contributes to regulation of DNA replication and ensures that replication initiation occurs exactly once per chromosome per cell cycle. Binds to pairs of hemimethylated GATC sequences in the oriC region, thus preventing assembly of replication proteins and re-initiation at newly replicated origins. Repression is relieved when the region becomes fully methylated. This is Negative modulator of initiation of replication from Shewanella oneidensis (strain ATCC 700550 / JCM 31522 / CIP 106686 / LMG 19005 / NCIMB 14063 / MR-1).